The sequence spans 175 residues: Pre-mRNA-splicing factor SNT309 (175 aa).

Belongs to the NTC complex (or PRP19-associated complex), composed of at least CEF1, CLF1, ISY1, NTC20, SNT309, SYF1, SYF2, and PRP19. The NTC complex associates with the spliceosome after the release of the U1 and U4 snRNAs and forms the CWC spliceosome subcomplex (or CEF1-associated complex) reminiscent of a late-stage spliceosome composed also of the U2, U5 and U6 snRNAs and at least BUD13, BUD31, BRR2, CDC40, CUS1, CWC2, CWC15, CWC21, CWC22, CWC23, CWC24, CWC25, CWC27, ECM2, HSH155, IST3, LEA1, MSL1, PRP8, PRP9, PRP11, PRP21, PRP22, PRP45, PRP46, SLU7, SMB1, SMD1, SMD2, SMD3, SMX2, SMX3, SNU114, SPP2, RSE1 and YJU2. Interacts with PRP19.

Its subcellular location is the nucleus. In terms of biological role, involved in pre-mRNA splicing by stabilizing the NTC (or PRP19-associated complex). As a component of the NTC complex, associates to the spliceosome to mediate conformational rearrangement or to stabilize the structure of the spliceosome after U4 snRNA dissociation, which leads to spliceosome maturation. The protein is Pre-mRNA-splicing factor SNT309 (SNT309) of Saccharomyces cerevisiae (strain ATCC 204508 / S288c) (Baker's yeast).